A 294-amino-acid chain; its full sequence is Protoheme IX farnesyltransferase 1 (294 aa).

Helical transmembrane passes span 8–28 (VTKP…FLLA), 35–55 (PWLM…GCAI), 82–102 (AMAA…LLIA), 107–127 (AAVF…SLYM), 132–152 (VYGT…GYCA), 162–182 (LILL…IAIF), 208–228 (IVLY…SGYT), 229–249 (GAAF…MALR), and 263–283 (QVFA…AVDY).

Belongs to the UbiA prenyltransferase family. Protoheme IX farnesyltransferase subfamily.

It localises to the cell inner membrane. The enzyme catalyses heme b + (2E,6E)-farnesyl diphosphate + H2O = Fe(II)-heme o + diphosphate. It functions in the pathway porphyrin-containing compound metabolism; heme O biosynthesis; heme O from protoheme: step 1/1. Converts heme B (protoheme IX) to heme O by substitution of the vinyl group on carbon 2 of heme B porphyrin ring with a hydroxyethyl farnesyl side group. The polypeptide is Protoheme IX farnesyltransferase 1 (Pseudoalteromonas translucida (strain TAC 125)).